Consider the following 259-residue polypeptide: MFLLRTTTATTTPASLPLPLLSISSHLSLSKPSSFPVTSTKPLFTLRHSSSTPKIMSWLGRLGXGTRTPADASMDQSSIAQGPDDDIPAPGQQFAQFGAGCFWGVELAFQRVPGVSKTEVGYTQGFLHNPTYNDICSGTTNHSEVVRVQYDPKACSFDSLLDCFWERHDPTTLNRQGNDVGTQYRSGIYFYTPEQEKAAIEAKERHQKKLNRTVVTEILPAKKFYRAEEYHQQYLAKGGRFGFRQSTEKGCNDPIRCYG.

Positions 66-90 (TRTPADASMDQSSIAQGPDDDIPAP) are disordered.

Belongs to the MsrA Met sulfoxide reductase family.

The catalysed reaction is L-methionyl-[protein] + [thioredoxin]-disulfide + H2O = L-methionyl-(S)-S-oxide-[protein] + [thioredoxin]-dithiol. It carries out the reaction [thioredoxin]-disulfide + L-methionine + H2O = L-methionine (S)-S-oxide + [thioredoxin]-dithiol. Its function is as follows. Has an important function as a repair enzyme for proteins that have been inactivated by oxidation. Catalyzes the reversible oxidation-reduction of methionine sulfoxide in proteins to methionine. This Lactuca sativa (Garden lettuce) protein is Peptide methionine sulfoxide reductase.